We begin with the raw amino-acid sequence, 264 residues long: MTVHKNRFRRSRSLSVTHRIQKRPDHREKTKLYLQLKLHDLHAVFNLFPEYEQKFLAIIKLPITGKEPIDVPFSLSNHHQHTCLEFSPYANEQISKSACLHCESVSVPTSSDAMVAHLNQVTNVMQNRFYFYGFRKDMELIRMSAKQPTIFQIFYIVHNTINNIFPIMFEKKQKLGMHIVFQSRTLHIPCECIKQIIAVSSGYNVYLDILQDSVILTVLCETLDTNTNIHIDIGMLQKKLEEMDIPNEISDRLEKYKGHLIGFH.

Residues 1 to 12 (MTVHKNRFRRSR) show a composition bias toward basic residues. Residues 1–22 (MTVHKNRFRRSRSLSVTHRIQK) are disordered. The CCCH-type zinc finger occupies 83-187 (CLEFSPYANE…HIVFQSRTLH (105 aa)).

The protein belongs to the herpesviridae NEC1 protein family. In terms of assembly, forms a heterohexameric complex with NEC2. Interacts with capsid vertex specific component 2/CVC2; this interaction directs the capsid to the host inner nuclear membrane to initiate budding. In terms of processing, phosphorylated at serine residues in the N-terminus. This phosphorylation regulates the localization within the inner nuclear membrane.

Its subcellular location is the host nucleus inner membrane. Plays an essential role in virion nuclear egress, the first step of virion release from infected cell. Within the host nucleus, NEC1 interacts with the newly formed capsid through the vertexes and directs it to the inner nuclear membrane by associating with NEC2. Induces the budding of the capsid at the inner nuclear membrane as well as its envelopment into the perinuclear space. There, the NEC1/NEC2 complex promotes the fusion of the enveloped capsid with the outer nuclear membrane and the subsequent release of the viral capsid into the cytoplasm where it will reach the secondary budding sites in the host Golgi or trans-Golgi network. In Human herpesvirus 6B (HHV-6 variant B), this protein is Nuclear egress protein 1.